Reading from the N-terminus, the 351-residue chain is S-adenosylmethionine:tRNA ribosyltransferase-isomerase (351 aa).

The protein belongs to the QueA family. Monomer.

It localises to the cytoplasm. It catalyses the reaction 7-aminomethyl-7-carbaguanosine(34) in tRNA + S-adenosyl-L-methionine = epoxyqueuosine(34) in tRNA + adenine + L-methionine + 2 H(+). It functions in the pathway tRNA modification; tRNA-queuosine biosynthesis. In terms of biological role, transfers and isomerizes the ribose moiety from AdoMet to the 7-aminomethyl group of 7-deazaguanine (preQ1-tRNA) to give epoxyqueuosine (oQ-tRNA). This Hydrogenovibrio crunogenus (strain DSM 25203 / XCL-2) (Thiomicrospira crunogena) protein is S-adenosylmethionine:tRNA ribosyltransferase-isomerase.